Reading from the N-terminus, the 419-residue chain is MSQLHRGMHKKPGMFPPKEVLEEVDAGSGSDTETEETVECTEEEEEQDETDGLGDLGMPPPKKTTKSAASPTVPAPALIPSLSHLIGLEGKQPSRKYAPAEWPQYFKQKISVARDNDTFNVLYTPPDDSEAPVYVFHHGAGSCAESFALLSVRLREMMHEERFQLAATAKIRDENKLPGMIAFDARGHGFTEVESTDYSLEAFTNDFAFIVANVVAEFGLTNNLILVGHSLGGAVVTNACHLKLIQHPVIGLAVLDVVEGTAIESLASMQQILNSRPKSFPTVEKGIEWTVQSHTIRNRESACVSVPPTLISQHDGPGMTWRTDLMLTKPYWKGWFTGLSEKFISCAPAKLLILAGTDRLDKDLMVGQMQGKYQLIVFQESGHFVQEDAPDKTALSLIDFWKRNDKVNKTVPLFGAFRA.

Basic residues predominate over residues 1–12 (MSQLHRGMHKKP). The tract at residues 1–75 (MSQLHRGMHK…KSAASPTVPA (75 aa)) is disordered. Residues 32-52 (TETEETVECTEEEEEQDETDG) are compositionally biased toward acidic residues. Residues S230, D256, and H383 contribute to the active site.

The protein belongs to the AB hydrolase superfamily.

It catalyses the reaction [phosphatase 2A protein]-C-terminal L-leucine methyl ester + H2O = [phosphatase 2A protein]-C-terminal L-leucine + methanol + H(+). Demethylates proteins that have been reversibly carboxymethylated. Demethylates the phosphatase PP2A catalytic subunit. The chain is Protein phosphatase methylesterase 1 (PPE1) from Yarrowia lipolytica (strain CLIB 122 / E 150) (Yeast).